Here is a 154-residue protein sequence, read N- to C-terminus: Large ribosomal subunit protein uL15 (154 aa).

Residues 1-13 show a composition bias toward basic and acidic residues; sequence MKLHELKPAEGSR. A disordered region spans residues 1-52; it reads MKLHELKPAEGSRKNRKRVGRGPGGTDKTAGRGHKGQKSRSGAGKGSFFEGG.

Belongs to the universal ribosomal protein uL15 family. Part of the 50S ribosomal subunit.

Binds to the 23S rRNA. The protein is Large ribosomal subunit protein uL15 of Deinococcus deserti (strain DSM 17065 / CIP 109153 / LMG 22923 / VCD115).